A 218-amino-acid polypeptide reads, in one-letter code: Cytochrome b6 (218 aa).

Residues 35–55 (IFYCLGGITLVCFLIQFATGF) traverse the membrane as a helical segment. Position 38 (C38) interacts with heme c. 2 residues coordinate heme b: H89 and H103. The next 3 membrane-spanning stretches (helical) occupy residues 93–113 (ASMMVLMLILHVFRVYLTGGF), 119–139 (LTWVTGVVMAVITVAFGVTGY), and 189–209 (LHTFVLPWTLAIFMLMHFLMI). Residues H190 and H205 each contribute to the heme b site.

It belongs to the cytochrome b family. PetB subfamily. In terms of assembly, the 4 large subunits of the cytochrome b6-f complex are cytochrome b6, subunit IV (17 kDa polypeptide, PetD), cytochrome f and the Rieske protein, while the 4 small subunits are PetG, PetL, PetM and PetN. The complex functions as a dimer. Requires heme b as cofactor. Heme c serves as cofactor.

It localises to the cellular thylakoid membrane. In terms of biological role, component of the cytochrome b6-f complex, which mediates electron transfer between photosystem II (PSII) and photosystem I (PSI), cyclic electron flow around PSI, and state transitions. The sequence is that of Cytochrome b6 from Prochlorococcus marinus (strain SARG / CCMP1375 / SS120).